A 468-amino-acid polypeptide reads, in one-letter code: Mitochondrial distribution and morphology protein 10 (468 aa).

The protein belongs to the MDM10 family. As to quaternary structure, component of the ER-mitochondria encounter structure (ERMES) or MDM complex, composed of MMM1, MDM10, MDM12 and MDM34. Associates with the mitochondrial outer membrane sorting assembly machinery SAM(core) complex.

It localises to the mitochondrion outer membrane. Component of the ERMES/MDM complex, which serves as a molecular tether to connect the endoplasmic reticulum and mitochondria. Components of this complex are involved in the control of mitochondrial shape and protein biogenesis and may function in phospholipid exchange. MDM10 is involved in the late assembly steps of the general translocase of the mitochondrial outer membrane (TOM complex). Functions in the TOM40-specific route of the assembly of outer membrane beta-barrel proteins, including the association of TOM40 with the receptor TOM22 and small TOM proteins. Can associate with the SAM(core) complex as well as the MDM12-MMM1 complex, both involved in late steps of the major beta-barrel assembly pathway, that is responsible for biogenesis of all outer membrane beta-barrel proteins. May act as a switch that shuttles between both complexes and channels precursor proteins into the TOM40-specific pathway. Plays a role in mitochondrial morphology and in the inheritance of mitochondria. The chain is Mitochondrial distribution and morphology protein 10 from Blastomyces gilchristii (strain SLH14081) (Blastomyces dermatitidis).